We begin with the raw amino-acid sequence, 391 residues long: Succinate--CoA ligase [ADP-forming] subunit beta (391 aa).

An ATP-grasp domain is found at 9-246 (KHLFTEAGIA…LTQEDETEVR (238 aa)). Residues Lys46, 53–55 (GRG), Glu99, Leu102, and Glu107 each bind ATP. Asn199 and Asp213 together coordinate Mg(2+). Substrate-binding positions include Asn266 and 323–325 (GIV).

This sequence belongs to the succinate/malate CoA ligase beta subunit family. In terms of assembly, heterotetramer of two alpha and two beta subunits. Mg(2+) is required as a cofactor.

It catalyses the reaction succinate + ATP + CoA = succinyl-CoA + ADP + phosphate. The catalysed reaction is GTP + succinate + CoA = succinyl-CoA + GDP + phosphate. It participates in carbohydrate metabolism; tricarboxylic acid cycle; succinate from succinyl-CoA (ligase route): step 1/1. Its function is as follows. Succinyl-CoA synthetase functions in the citric acid cycle (TCA), coupling the hydrolysis of succinyl-CoA to the synthesis of either ATP or GTP and thus represents the only step of substrate-level phosphorylation in the TCA. The beta subunit provides nucleotide specificity of the enzyme and binds the substrate succinate, while the binding sites for coenzyme A and phosphate are found in the alpha subunit. This is Succinate--CoA ligase [ADP-forming] subunit beta from Halorhodospira halophila (strain DSM 244 / SL1) (Ectothiorhodospira halophila (strain DSM 244 / SL1)).